The chain runs to 369 residues: L-lactate oxidase (369 aa).

The region spanning 13–369 (EKKLNVLNLD…KNAKLLNIRY (357 aa)) is the FMN hydroxy acid dehydrogenase domain. Tyr-39 contacts pyruvate. FMN-binding positions include 92–94 (PAA), Ser-121, and Gln-143. Tyr-145 lines the pyruvate pocket. Position 171 (Thr-171) interacts with FMN. Arg-180 is a binding site for pyruvate. The FMN site is built by Lys-240 and Ser-262. The pyruvate site is built by His-264 and Arg-267. Residue His-264 is the Proton acceptor of the active site. FMN contacts are provided by residues 295–299 (DSGIR) and Arg-319.

The protein belongs to the FMN-dependent alpha-hydroxy acid dehydrogenase family. Homotetramer. FMN serves as cofactor.

The enzyme catalyses (S)-lactate + O2 = pyruvate + H2O2. Catalyzes the oxidation of (S)-lactate (L-lactate) to pyruvate, with a reduction of O2 to H2O2. May be involved in the utilization of L-lactate as an energy source for growth. The protein is L-lactate oxidase of Lentilactobacillus hilgardii (strain ATCC 8290 / DSM 20176 / CCUG 30140 / JCM 1155 / KCTC 3500 / NBRC 15886 / NCIMB 8040 / NRRL B-1843 / 9).